Consider the following 485-residue polypeptide: GlcNAc-binding protein A (485 aa).

The signal sequence occupies residues 1–23; sequence MKKQPKMTAIALILSGISGLAYG. One can recognise a Chitin-binding type-4 domain in the interval 24–201; sequence HGYVSAVENG…SFYNVIDVKF (178 aa). Residues 437 to 478 enclose the Chitin-binding type-3 domain; that stretch reads AGTKVLASDGAIYQCKPWPYSGYCQQWTSNATQYQPGTGSHW.

Belongs to the GbpA family.

Its subcellular location is the secreted. Probably interacts with GlcNAc residues. May promote attachment to both epithelial cell surfaces and chitin. The polypeptide is GlcNAc-binding protein A (Vibrio cholerae serotype O1 (strain ATCC 39541 / Classical Ogawa 395 / O395)).